The primary structure comprises 515 residues: Maturase K (515 aa).

It belongs to the intron maturase 2 family. MatK subfamily.

It localises to the plastid. The protein resides in the chloroplast. In terms of biological role, usually encoded in the trnK tRNA gene intron. Probably assists in splicing its own and other chloroplast group II introns. The sequence is that of Maturase K from Picea abies (Norway spruce).